Here is a 177-residue protein sequence, read N- to C-terminus: SPbeta prophage-derived uncharacterized protein YopI (177 aa).

Residues F11 to L31 form a helical membrane-spanning segment.

The protein localises to the cell membrane. This is SPbeta prophage-derived uncharacterized protein YopI (yopI) from Bacillus subtilis (strain 168).